Reading from the N-terminus, the 355-residue chain is Methyltransferase FUS9 (355 aa).

Residues Tyr-18, Asn-63, Asp-86, Ser-123, and Phe-124 each coordinate S-adenosyl-L-homocysteine. Phe-231 is a binding site for Mg(2+).

It belongs to the methyltransferase superfamily. Type-7 methyltransferase family. The cofactor is Mg(2+).

It functions in the pathway mycotoxin biosynthesis. Methyltransferase; part of the gene cluster that mediates the biosynthesis of the mycotoxin fusarin C. Within the cluster, FUS1, FUS2, FUS8 and FUS9 are sufficient for fusarin production. The roles of the other FUS members are yet undetermined. The fusarin C synthetase FUS1 is responsible for the condensation of one acetyl-coenzyme A (CoA) unit with six malonyl-CoA units and the amide linkage of the arising heptaketide and homoserine, subsequently releasing the first intermediate, prefusarin, as an alcohol with an open ring structure. The cytochrome P450 monooxygenase FUS8 participates in multiple oxidation processes at carbon C-20 and is able to use the FUS1 product as substrate, resulting in formation of 20-hydroxy-prefusarin. This reaction seems to be essential before the 2-pyrrolidone ring closure can be catalyzed by FUS2, generating 20-hydroxy-fusarin. FUS8 is able to further oxidizes carbon C-20 after ring closure, resulting in the formation of carboxy-fusarin C. As the last step, FUS9 methylates the hydroxyl group at C-21 to generate fusarin C. Fusarin C can then rearrange to epi-fusarin C, the (z)-isomers, and fusarin A and fusarin D. This chain is Methyltransferase FUS9, found in Gibberella moniliformis (strain M3125 / FGSC 7600) (Maize ear and stalk rot fungus).